A 154-amino-acid chain; its full sequence is Endoribonuclease YbeY (154 aa).

3 residues coordinate Zn(2+): histidine 113, histidine 117, and histidine 123.

Belongs to the endoribonuclease YbeY family. Requires Zn(2+) as cofactor.

It is found in the cytoplasm. Single strand-specific metallo-endoribonuclease involved in late-stage 70S ribosome quality control and in maturation of the 3' terminus of the 16S rRNA. The polypeptide is Endoribonuclease YbeY (Aeromonas hydrophila subsp. hydrophila (strain ATCC 7966 / DSM 30187 / BCRC 13018 / CCUG 14551 / JCM 1027 / KCTC 2358 / NCIMB 9240 / NCTC 8049)).